A 152-amino-acid polypeptide reads, in one-letter code: Protein IpgF (152 aa).

The N-terminal stretch at M1–R17 is a signal peptide.

The protein belongs to the IagB/IpgF/P19 family.

The polypeptide is Protein IpgF (ipgF) (Shigella flexneri).